The chain runs to 311 residues: Solute carrier family 25 member 36 (311 aa).

Solcar repeat units follow at residues arginine 4–lysine 108, aspartate 116–lysine 203, and serine 224–leucine 308. 6 helical membrane-spanning segments follow: residues leucine 7 to leucine 27, leucine 41 to asparagine 57, glycine 111 to threonine 131, methionine 180 to isoleucine 200, phenylalanine 226 to proline 246, and glutamine 291 to glycine 311.

It belongs to the mitochondrial carrier (TC 2.A.29) family.

The protein localises to the mitochondrion inner membrane. The enzyme catalyses UTP(in) + CTP(out) = UTP(out) + CTP(in). It catalyses the reaction CTP(out) + UDP(in) = CTP(in) + UDP(out). The catalysed reaction is UMP(in) + CTP(out) = UMP(out) + CTP(in). It carries out the reaction dUTP(in) + CTP(out) = dUTP(out) + CTP(in). The enzyme catalyses dUMP(in) + CTP(out) = dUMP(out) + CTP(in). It catalyses the reaction CDP(in) + CTP(out) = CDP(out) + CTP(in). The catalysed reaction is CTP(out) + CMP(in) = CTP(in) + CMP(out). It carries out the reaction dCTP(in) + CTP(out) = dCTP(out) + CTP(in). The enzyme catalyses dCDP(in) + CTP(out) = dCDP(out) + CTP(in). It catalyses the reaction dCMP(in) + CTP(out) = dCMP(out) + CTP(in). The catalysed reaction is GTP(in) + CTP(out) = GTP(out) + CTP(in). It carries out the reaction CTP(out) + GDP(in) = CTP(in) + GDP(out). The enzyme catalyses GMP(in) + CTP(out) = GMP(out) + CTP(in). It catalyses the reaction dGTP(in) + CTP(out) = dGTP(out) + CTP(in). The catalysed reaction is dGMP(in) + CTP(out) = dGMP(out) + CTP(in). It carries out the reaction ITP(in) + CTP(out) = ITP(out) + CTP(in). The enzyme catalyses IDP(in) + CTP(out) = IDP(out) + CTP(in). It catalyses the reaction IMP(in) + CTP(out) = IMP(out) + CTP(in). The catalysed reaction is CTP(out) = CTP(in). Its function is as follows. Mitochondrial transporter that imports/exports pyrimidine nucleotides into and from mitochondria. Selectively transports cytosine, guanosine, inosine and uridine (deoxy)nucleoside mono-, di-, and triphosphates by antiport mechanism. Catalyzes uniport at much lower rate. May import (deoxy)nucleoside triphosphates in exchange for intramitochondrial (deoxy)nucleoside mono- and diphosphates, thus providing precursors necessary for de novo synthesis of mitochondrial DNA and RNA while exporting products of their catabolism. Participates in mitochondrial genome maintenance, regulation of mitochondrial membrane potential and mitochondrial respiration. In Mus musculus (Mouse), this protein is Solute carrier family 25 member 36 (Slc25a36).